The sequence spans 705 residues: Catalase C (705 aa).

The tract at residues 1-31 (MAKKPSAPNNTKPATIHDQKATRGNGGELHQ) is disordered. Residues H88 and N161 contribute to the active site. Position 375 (Y375) interacts with heme.

This sequence belongs to the catalase family. HPII subfamily. Heme serves as cofactor.

The enzyme catalyses 2 H2O2 = O2 + 2 H2O. In terms of biological role, decomposes hydrogen peroxide into water and oxygen; serves to protect cells from the toxic effects of hydrogen peroxide. Could protect cells in nodules which have a high potential to produce hydrogen peroxide because of the strong reducing conditions required for nitrogen fixation and the action of several proteins. The sequence is that of Catalase C (katE) from Rhizobium meliloti (strain 1021) (Ensifer meliloti).